A 1857-amino-acid polypeptide reads, in one-letter code: Chitin synthase Y (1857 aa).

A disordered region spans residues 1-22 (MVGPSPAGTVPSHAQSSLPSLP). One can recognise a Myosin motor domain in the interval 1–788 (MVGPSPAGTV…CWADLAKVGE (788 aa)). 102–109 (GESGAGKT) is an ATP binding site. Residues 601 to 653 (SSKPLRMPSMARRKASPASRLTFDAPTAEEPEDNESYGGSTAKSSGRRKSAMS) form a disordered region. N-linked (GlcNAc...) asparagine glycosylation is present at asparagine 634. The segment at 668–692 (LEIVNKCLSSPSLNPYFIFCLKPND) is actin-binding. The next 2 membrane-spanning stretches (helical) occupy residues 898-918 (WMAI…RLFG) and 937-957 (LIIW…PGLV). The 60-residue stretch at 961 to 1020 (QHVYSAAELESHNGKNGHDSYIAIRGVVFDLDKFMPRHYPDIVPQSSLKKYAGMDATGLF) folds into the Cytochrome b5 heme-binding domain. N-linked (GlcNAc...) asparagine glycosylation is found at asparagine 1047 and asparagine 1072. Residues 1209 to 1229 (FILAISILICAVVIFKFAAAL) form a helical membrane-spanning segment. The N-linked (GlcNAc...) asparagine glycan is linked to asparagine 1572. 3 helical membrane-spanning segments follow: residues 1603–1623 (LLST…IVWL), 1630–1650 (IPWT…LIFI), and 1657–1677 (MIGW…ALPF). Positions 1799-1854 (LPSDDAILAEIREILRTADLMTVTKKSIKQELERRFGVNLDAKRPYINSATEAVLS) constitute a DEK-C domain.

The protein in the N-terminal section; belongs to the TRAFAC class myosin-kinesin ATPase superfamily. Myosin family. In the C-terminal section; belongs to the chitin synthase family. Class V subfamily.

The protein resides in the cell membrane. Its subcellular location is the cell septum. It is found in the cell tip. It catalyses the reaction [(1-&gt;4)-N-acetyl-beta-D-glucosaminyl](n) + UDP-N-acetyl-alpha-D-glucosamine = [(1-&gt;4)-N-acetyl-beta-D-glucosaminyl](n+1) + UDP + H(+). Its function is as follows. Polymerizes chitin, a structural polymer of the cell wall and septum, by transferring the sugar moiety of UDP-GlcNAc to the non-reducing end of the growing chitin polymer. Specifically involved in hyphal elongation and new cell wall formation. This is Chitin synthase Y from Aspergillus oryzae (strain ATCC 42149 / RIB 40) (Yellow koji mold).